The chain runs to 425 residues: MVIIMQFYKEENFKEMHGLRVPEDWEVVRIGDFIKYIKGKKPAVMVDEELEGYYPYLSTEYLRDGIASKFVKITNKEIIVNENDILLLWDGSNAGEIFLGKKGILSSTMVKLEQKNKIMDDLYLFYSLKLKESFLKSQTKGTGIPHVDKKIFENIKIPLPPLEEQKQIAKILSDFDNLIGTINKQIEVLNKAKKGMMKKLFTKGVFEHKSFKKSEIGEIPEDWEVVKLKEVVDIQSGKYFKYSEFCENGVKCLKIDNVGFGKIFWETVSFLPEDYLNKYPQLVLKSGDIVLALNRPIIGGKIKIGILKDIDEPAILYQRVGRFIFKSEKIDKQFLFYLLMSEYFKKELSKLLIGTDQPYIRTPVLLNIKIPLPHLEEQKAMAERLKSIDNLIEIKRKEKEQIEKAKKKIMNLLLTGKIRVKNLNF.

Belongs to the type-I restriction system S methylase family. In terms of assembly, the type I restriction/modification system is composed of three polypeptides R, M and S.

Functionally, the specificity (S) subunit of a type I restriction enzyme; this subunit dictates DNA sequence specificity. The M and S subunits together form a methyltransferase (MTase) that methylates A-2 on the top and A-3 on the bottom strand of the sequence 5'-GAYN(5)GTAA-3'. In the presence of the R subunit the complex can also act as an endonuclease, binding to the same target sequence but cutting the DNA some distance from this site. Whether the DNA is cut or modified depends on the methylation state of the target sequence. When the target site is unmodified, the DNA is cut. When the target site is hemimethylated, the complex acts as a maintenance MTase modifying the DNA so that both strands become methylated. After locating a non-methylated recognition site, the enzyme complex serves as a molecular motor that translocates DNA in an ATP-dependent manner until a collision occurs that triggers cleavage. The polypeptide is Type I restriction enzyme MjaVIII specificity subunit (Methanocaldococcus jannaschii (strain ATCC 43067 / DSM 2661 / JAL-1 / JCM 10045 / NBRC 100440) (Methanococcus jannaschii)).